A 633-amino-acid polypeptide reads, in one-letter code: Glutamyl-tRNA(Gln) amidotransferase subunit E (633 aa).

This sequence belongs to the GatB/GatE family. GatE subfamily. Heterodimer of GatD and GatE.

It catalyses the reaction L-glutamyl-tRNA(Gln) + L-glutamine + ATP + H2O = L-glutaminyl-tRNA(Gln) + L-glutamate + ADP + phosphate + H(+). Functionally, allows the formation of correctly charged Gln-tRNA(Gln) through the transamidation of misacylated Glu-tRNA(Gln) in organisms which lack glutaminyl-tRNA synthetase. The reaction takes place in the presence of glutamine and ATP through an activated gamma-phospho-Glu-tRNA(Gln). The GatDE system is specific for glutamate and does not act on aspartate. This chain is Glutamyl-tRNA(Gln) amidotransferase subunit E, found in Methanococcus vannielii (strain ATCC 35089 / DSM 1224 / JCM 13029 / OCM 148 / SB).